We begin with the raw amino-acid sequence, 332 residues long: Glycerol-3-phosphate dehydrogenase [NAD(P)+] (332 aa).

NADPH contacts are provided by tryptophan 13, arginine 33, and lysine 107. Lysine 107, glycine 136, and serine 138 together coordinate sn-glycerol 3-phosphate. Alanine 140 serves as a coordination point for NADPH. Sn-glycerol 3-phosphate-binding residues include lysine 191, aspartate 244, serine 254, arginine 255, and asparagine 256. Lysine 191 serves as the catalytic Proton acceptor. Residue arginine 255 coordinates NADPH. Position 280 (glutamate 280) interacts with NADPH.

The protein belongs to the NAD-dependent glycerol-3-phosphate dehydrogenase family.

It localises to the cytoplasm. It catalyses the reaction sn-glycerol 3-phosphate + NAD(+) = dihydroxyacetone phosphate + NADH + H(+). The catalysed reaction is sn-glycerol 3-phosphate + NADP(+) = dihydroxyacetone phosphate + NADPH + H(+). Its pathway is membrane lipid metabolism; glycerophospholipid metabolism. In terms of biological role, catalyzes the reduction of the glycolytic intermediate dihydroxyacetone phosphate (DHAP) to sn-glycerol 3-phosphate (G3P), the key precursor for phospholipid synthesis. This is Glycerol-3-phosphate dehydrogenase [NAD(P)+] from Alkalilimnicola ehrlichii (strain ATCC BAA-1101 / DSM 17681 / MLHE-1).